Here is a 556-residue protein sequence, read N- to C-terminus: 3-phosphoinositide-dependent protein kinase 1 (556 aa).

Phosphotyrosine; by SRC and INSR is present on Tyr-9. Position 25 is a phosphoserine (Ser-25). A disordered region spans residues 26 to 80 (PSMVRTQTESSTPPGIPGGSRQGPAMDGTAAEPRPGAGSLQHAQPPPQPRKKRPE). A compositionally biased stretch (polar residues) spans 28 to 38 (MVRTQTESSTP). A Protein kinase domain is found at 82-342 (FKFGKILGEG…YGPLKAHPFF (261 aa)). ATP-binding positions include 92 to 94 (SFS) and Lys-111. Residues 113–157 (LEKRHIIKENKVPYVTRERDVMSRLDHPFFVKLYFTFQDDEKLYF) are PIF-pocket. Residues 160–162 (SYA) and Glu-166 contribute to the ATP site. The Proton acceptor role is filled by Asp-205. Glu-209 and Asp-223 together coordinate ATP. Ser-241 carries the phosphoserine; by autocatalysis modification. Lys-304 carries the N6-acetyllysine modification. A Phosphothreonine; by MELK modification is found at Thr-354. A phosphotyrosine; by SRC and INSR mark is found at Tyr-373 and Tyr-376. Position 393 is a phosphoserine (Ser-393). Ser-394 is subject to Phosphoserine; by MAP3K5. Ser-396 carries the phosphoserine modification. Ser-398 is modified (phosphoserine; by MAP3K5). Position 410 is a phosphoserine (Ser-410). The region spanning 459–550 (KMGPVDKRKG…EVWRQRYQSH (92 aa)) is the PH domain. At Ser-501 the chain carries Phosphoserine; by PKC/PRKCQ. Thr-513 carries the post-translational modification Phosphothreonine; by autocatalysis. Ser-529 is modified (phosphoserine; by PKC/PRKCQ).

The protein belongs to the protein kinase superfamily. AGC Ser/Thr protein kinase family. PDPK1 subfamily. As to quaternary structure, homodimer in its autoinhibited state. Active as monomer. Interacts with NPRL2, PPARG, PAK1, PTK2B, GRB14, PKN1 (via C-terminus), STRAP and IKKB. The Tyr-9 phosphorylated form interacts with SRC, RASA1 and CRK (via their SH2 domains). Interacts with SGK3 in a phosphorylation-dependent manner. The tyrosine-phosphorylated form interacts with PTPN6. The Ser-241 phosphorylated form interacts with YWHAH and YWHAQ. Binds INSR in response to insulin. Interacts (via PH domain) with SMAD3, SMAD4 and SMAD7. Interacts with PKN2; the interaction stimulates PDPK1 autophosphorylation, its PI(3,4,5)P3-dependent kinase activity toward 'Ser-473' of AKT1 but also activates its kinase activity toward PRKCD and PRKCZ. Phosphorylation on Ser-241 in the activation loop is required for full activity. PDPK1 itself can autophosphorylate Ser-241, leading to its own activation. Autophosphorylation is inhibited by the apoptotic C-terminus cleavage product of PKN2. Tyr-9 phosphorylation is critical for stabilization of both PDPK1 and the PDPK1/SRC complex via HSP90-mediated protection of PDPK1 degradation. Angiotensin II stimulates the tyrosine phosphorylation of PDPK1 in vascular smooth muscle in a calcium- and SRC-dependent manner. Phosphorylated on Tyr-9, Tyr-373 and Tyr-376 by INSR in response to insulin. Palmitate negatively regulates autophosphorylation at Ser-241 and palmitate-induced phosphorylation at Ser-529 and Ser-501 by PKC/PRKCQ negatively regulates its ability to phosphorylate PKB/AKT1. Phosphorylation at Thr-354 by MELK partially inhibits kinase activity, the inhibition is cooperatively enhanced by phosphorylation at Ser-394 and Ser-398 by MAP3K5. In terms of processing, autophosphorylated; autophosphorylation is inhibited by the apoptotic C-terminus cleavage product of PKN2. Post-translationally, monoubiquitinated in the kinase domain, deubiquitinated by USP4. In terms of tissue distribution, appears to be expressed ubiquitously. The Tyr-9 phosphorylated form is markedly increased in diseased tissue compared with normal tissue from lung, liver, colon and breast.

Its subcellular location is the cytoplasm. The protein localises to the nucleus. The protein resides in the cell membrane. It localises to the cell junction. It is found in the focal adhesion. The catalysed reaction is L-seryl-[protein] + ATP = O-phospho-L-seryl-[protein] + ADP + H(+). It catalyses the reaction L-threonyl-[protein] + ATP = O-phospho-L-threonyl-[protein] + ADP + H(+). Its activity is regulated as follows. Homodimerization regulates its activity by maintaining the kinase in an autoinhibitory conformation. NPRL2 down-regulates its activity by interfering with tyrosine phosphorylation at the Tyr-9, Tyr-373 and Tyr-376 residues. The 14-3-3 protein YWHAQ acts as a negative regulator by association with the residues surrounding the Ser-241 residue. STRAP positively regulates its activity by enhancing its autophosphorylation and by stimulating its dissociation from YWHAQ. SMAD2, SMAD3, SMAD4 and SMAD7 also positively regulate its activity by stimulating its dissociation from YWHAQ. Activated by phosphorylation on Tyr-9, Tyr-373 and Tyr-376 by INSR in response to insulin. Functionally, serine/threonine kinase which acts as a master kinase, phosphorylating and activating a subgroup of the AGC family of protein kinases. Its targets include: protein kinase B (PKB/AKT1, PKB/AKT2, PKB/AKT3), p70 ribosomal protein S6 kinase (RPS6KB1), p90 ribosomal protein S6 kinase (RPS6KA1, RPS6KA2 and RPS6KA3), cyclic AMP-dependent protein kinase (PRKACA), protein kinase C (PRKCD and PRKCZ), serum and glucocorticoid-inducible kinase (SGK1, SGK2 and SGK3), p21-activated kinase-1 (PAK1), TSSK3, protein kinase PKN (PKN1 and PKN2). Plays a central role in the transduction of signals from insulin by providing the activating phosphorylation to PKB/AKT1, thus propagating the signal to downstream targets controlling cell proliferation and survival, as well as glucose and amino acid uptake and storage. Negatively regulates the TGF-beta-induced signaling by: modulating the association of SMAD3 and SMAD7 with TGF-beta receptor, phosphorylating SMAD2, SMAD3, SMAD4 and SMAD7, preventing the nuclear translocation of SMAD3 and SMAD4 and the translocation of SMAD7 from the nucleus to the cytoplasm in response to TGF-beta. Activates PPARG transcriptional activity and promotes adipocyte differentiation. Activates the NF-kappa-B pathway via phosphorylation of IKKB. The tyrosine phosphorylated form is crucial for the regulation of focal adhesions by angiotensin II. Controls proliferation, survival, and growth of developing pancreatic cells. Participates in the regulation of Ca(2+) entry and Ca(2+)-activated K(+) channels of mast cells. Essential for the motility of vascular endothelial cells (ECs) and is involved in the regulation of their chemotaxis. Plays a critical role in cardiac homeostasis by serving as a dual effector for cell survival and beta-adrenergic response. Plays an important role during thymocyte development by regulating the expression of key nutrient receptors on the surface of pre-T cells and mediating Notch-induced cell growth and proliferative responses. Provides negative feedback inhibition to toll-like receptor-mediated NF-kappa-B activation in macrophages. Catalytically inactive. This chain is 3-phosphoinositide-dependent protein kinase 1 (PDPK1), found in Homo sapiens (Human).